The following is a 198-amino-acid chain: Ribosome maturation factor RimM (198 aa).

Residues Asp-92–Glu-168 form the PRC barrel domain. A compositionally biased stretch (acidic residues) spans Ala-163–Ser-172. The tract at residues Ala-163–Pro-198 is disordered.

Belongs to the RimM family. In terms of assembly, binds ribosomal protein uS19.

It localises to the cytoplasm. Functionally, an accessory protein needed during the final step in the assembly of 30S ribosomal subunit, possibly for assembly of the head region. Essential for efficient processing of 16S rRNA. May be needed both before and after RbfA during the maturation of 16S rRNA. It has affinity for free ribosomal 30S subunits but not for 70S ribosomes. This Bradyrhizobium sp. (strain BTAi1 / ATCC BAA-1182) protein is Ribosome maturation factor RimM.